Reading from the N-terminus, the 488-residue chain is Tetratricopeptide repeat protein 23 (488 aa).

5 TPR repeats span residues 45–78 (LHLC…TRIC), 137–170 (LELF…SKEM), 186–219 (SRIK…TEIT), 228–261 (VQVL…TPQP), and 398–431 (AETY…ETFL).

In terms of assembly, associated with the EvC complex composed of EFCAB7, IQCE, EVC2 and EVC.

Its subcellular location is the cell projection. The protein resides in the cilium. Functionally, participates positively in the ciliary Hedgehog (Hh) signaling. The chain is Tetratricopeptide repeat protein 23 (Ttc23) from Mus musculus (Mouse).